Consider the following 503-residue polypeptide: Glutamate/gamma-aminobutyrate antiporter (503 aa).

L-glutamate is bound at residue 33–43 (LHLVFFLLLGG). 7 consecutive transmembrane segments (helical) span residues 35–55 (LVFFLLLGGLLWFLPVALCAA), 153–173 (FVVGIVIPSIILFGLAAAYFI), 194–214 (VSTLVVFVSFILAYMGVEASA), 232–252 (ILLVILAISLDAIGGFSVAAV), 366–386 (LTVVIYLVGYLLFFIGYFVLI), 407–427 (IIAGIGFLLSIFALFISFVPP), and 440–460 (MILLISFVVTAILPFIVYELH).

Belongs to the amino acid-polyamine-organocation (APC) superfamily. Glutamate:GABA antiporter (GGA) (TC 2.A.3.7) family.

The protein resides in the cell membrane. The enzyme catalyses 4-aminobutanoate(in) + L-glutamate(out) = 4-aminobutanoate(out) + L-glutamate(in). In terms of biological role, involved in glutaminase-dependent acid resistance. Exchanges extracellular glutamate (Glu) for intracellular gamma-aminobutyric acid (GABA) under acidic conditions. This chain is Glutamate/gamma-aminobutyrate antiporter (gadC), found in Lactococcus lactis subsp. lactis (strain IL1403) (Streptococcus lactis).